A 282-amino-acid chain; its full sequence is Bis(5'-nucleosyl)-tetraphosphatase, symmetrical (282 aa).

The protein belongs to the Ap4A hydrolase family.

The catalysed reaction is P(1),P(4)-bis(5'-adenosyl) tetraphosphate + H2O = 2 ADP + 2 H(+). In terms of biological role, hydrolyzes diadenosine 5',5'''-P1,P4-tetraphosphate to yield ADP. The sequence is that of Bis(5'-nucleosyl)-tetraphosphatase, symmetrical from Escherichia fergusonii (strain ATCC 35469 / DSM 13698 / CCUG 18766 / IAM 14443 / JCM 21226 / LMG 7866 / NBRC 102419 / NCTC 12128 / CDC 0568-73).